The primary structure comprises 135 residues: Transcription antitermination protein NusB (135 aa).

It belongs to the NusB family.

Functionally, involved in transcription antitermination. Required for transcription of ribosomal RNA (rRNA) genes. Binds specifically to the boxA antiterminator sequence of the ribosomal RNA (rrn) operons. This chain is Transcription antitermination protein NusB, found in Shewanella halifaxensis (strain HAW-EB4).